Consider the following 171-residue polypeptide: HTH-type transcriptional regulator AldR (171 aa).

Over residues 1-14 (MSEGSSITGVQTPG) the composition is skewed to polar residues. The segment at 1 to 21 (MSEGSSITGVQTPGSPKDVRA) is disordered. The region spanning 24–85 (LDDIDRRILL…DIDPAAVGLG (62 aa)) is the HTH asnC-type domain. The segment at residues 43–62 (NSALAEMVGIAPSTCHGRVR) is a DNA-binding region (H-T-H motif).

As to quaternary structure, homodimer in the absence of L-alanine. Homooctamer in the presence of L-alanine. Homotetramers in the presence of L-cysteine.

With respect to regulation, in the presence of alanine, AldR changes its quaternary structure from a homodimer to an octamer with an open-ring conformation. The binding affinity of AldR for the ald control region is increased significantly by L-alanine. In vitro, L-cysteine also increases the binding affinity of AldR for the target DNA. Functionally, transcriptional regulator that might play a role under hypoxic conditions. Regulates the expression of ald, which encodes L-alanine dehydrogenase. Serves as both an activator for ald expression in the presence of L-alanine and a repressor in the absence of L-alanine. Acts by binding directly to the upstream region of the ald gene. Four AldR-binding sites (O2, O1, O4 and O3) were identified upstream of the ald gene. O2, O1 and O4 are required for the induction of ald expression by alanine, while O3 is directly involved in the repression of ald expression, by occluding the access of RNA polymerase to the ald promoter. In addition to O3, both O1 and O4 are also necessary for full repression of ald expression in the absence of alanine. The protein is HTH-type transcriptional regulator AldR of Mycolicibacterium smegmatis (strain ATCC 700084 / mc(2)155) (Mycobacterium smegmatis).